Consider the following 2390-residue polypeptide: Spectrin beta chain, non-erythrocytic 2 (2390 aa).

Ser-2 is subject to N-acetylserine. Residues 2–278 form an actin-binding region; the sequence is SSTLSPTDFD…IITYVATYYH (277 aa). Ser-6 and Ser-31 each carry phosphoserine. 2 consecutive Calponin-homology (CH) domains span residues 57–161 and 176–281; these read AVQK…LRFQ and KSAK…HYFS. 6 Spectrin repeats span residues 306 to 414, 427 to 527, 532 to 639, 642 to 744, 749 to 849, and 855 to 954; these read LVEK…LALR, AARF…RERL, ELQK…RLEE, RLWR…QRLA, LYQF…RALE, and YTML…KAAL. Ser-959 carries the post-translational modification Phosphoserine. Spectrin repeat units lie at residues 960–1063, 1066–1169, 1174–1262, 1279–1379, 1384–1485, 1489–1586, 1589–1692, 1696–1797, 1801–1904, 1910–2010, and 2017–2076; these read IQNY…SLGE, RLQD…GRLA, FQGF…RHKK, EQQH…ARSL, RAEL…RRLQ, EQHQ…RLED, RAQQ…RLQE, LCQL…GQVL, YELQ…QLLL, FRFF…DWLQ, and VFGR…EKLT. At Ser-1073 the chain carries Phosphoserine. The segment covering 2081-2096 has biased composition (basic and acidic residues); sequence REKERKRKREEEERRK. Disordered regions lie at residues 2081-2222 and 2331-2390; these read REKE…EQME and SSAS…KKNK. Positions 2116 to 2125 are enriched in polar residues; the sequence is QTASDTTWDG. Ser-2171 and Ser-2199 each carry phosphoserine. The region spanning 2218-2328 is the PH domain; that stretch reads QEQMEGMLCR…WLRVVNAAIA (111 aa). Thr-2354 bears the Phosphothreonine mark. A Phosphoserine modification is found at Ser-2359. Positions 2370-2383 are enriched in basic and acidic residues; that stretch reads RSKDGREREREKRF.

This sequence belongs to the spectrin family. As to expression, highly expressed in brain, kidney, pancreas, and liver, and at lower levels in lung and placenta.

The protein localises to the cytoplasm. It is found in the cytoskeleton. Its subcellular location is the cell cortex. Functionally, probably plays an important role in neuronal membrane skeleton. This chain is Spectrin beta chain, non-erythrocytic 2 (SPTBN2), found in Homo sapiens (Human).